The sequence spans 497 residues: Apolipoprotein N-acyltransferase (497 aa).

Transmembrane regions (helical) follow at residues 21 to 41 (FAPF…ALLW), 51 to 71 (ALTG…WLYV), 85 to 105 (VLAL…TGWI), 119 to 139 (GMVA…FTGF), 157 to 177 (FAPV…AAWL), and 189 to 209 (FWLG…IHWT). A CN hydrolase domain is found at 221–461 (LQGNIPQNMK…GLHSTAQGFG (241 aa)). Glutamate 259 functions as the Proton acceptor in the catalytic mechanism. Lysine 319 is a catalytic residue. The Nucleophile role is filled by cysteine 371. The helical transmembrane segment at 472–492 (SLVFALIGLLLLAGSLAAFSG) threads the bilayer.

Belongs to the CN hydrolase family. Apolipoprotein N-acyltransferase subfamily.

It is found in the cell inner membrane. The catalysed reaction is N-terminal S-1,2-diacyl-sn-glyceryl-L-cysteinyl-[lipoprotein] + a glycerophospholipid = N-acyl-S-1,2-diacyl-sn-glyceryl-L-cysteinyl-[lipoprotein] + a 2-acyl-sn-glycero-3-phospholipid + H(+). It participates in protein modification; lipoprotein biosynthesis (N-acyl transfer). Its function is as follows. Catalyzes the phospholipid dependent N-acylation of the N-terminal cysteine of apolipoprotein, the last step in lipoprotein maturation. The sequence is that of Apolipoprotein N-acyltransferase from Nitrosomonas europaea (strain ATCC 19718 / CIP 103999 / KCTC 2705 / NBRC 14298).